A 320-amino-acid polypeptide reads, in one-letter code: Cytochrome f (320 aa).

Positions 1–35 are cleaved as a signal peptide; it reads MQTRNTFSWIREEITRSISVSLMIYIITWASISSA. Heme contacts are provided by tyrosine 36, cysteine 56, cysteine 59, and histidine 60. The helical transmembrane segment at 286–306 threads the bilayer; the sequence is VQGLLFFLGSVVLAQIFLVLK.

It belongs to the cytochrome f family. In terms of assembly, the 4 large subunits of the cytochrome b6-f complex are cytochrome b6, subunit IV (17 kDa polypeptide, petD), cytochrome f and the Rieske protein, while the 4 small subunits are PetG, PetL, PetM and PetN. The complex functions as a dimer. Heme is required as a cofactor.

Its subcellular location is the plastid. The protein resides in the chloroplast thylakoid membrane. Functionally, component of the cytochrome b6-f complex, which mediates electron transfer between photosystem II (PSII) and photosystem I (PSI), cyclic electron flow around PSI, and state transitions. This Lepidium virginicum (Virginia pepperweed) protein is Cytochrome f.